The following is a 213-amino-acid chain: MAPAQRPLLPLLLLLLPLPPPPFARAEDAARANSDRYAVYWNRSNPRFHAGAGDDGGGYTVEVSINDYLDIYCPHYGAPLPPAERMEHYVLYMVNGEGHASCDHRQRGFKRWECNRPAAPGGPLKFSEKFQLFTPFSLGFEFRPGHEYYYISATPPNAVDRPCLRLKVYVRPTNETLYEAPEPIFTSNNSCSSPGGCRLFLSTIPVLWTLLGS.

The signal sequence occupies residues 1–24; it reads MAPAQRPLLPLLLLLLPLPPPPFA. Positions 34–174 constitute an Ephrin RBD domain; the sequence is SDRYAVYWNR…RLKVYVRPTN (141 aa). An N-linked (GlcNAc...) asparagine glycan is attached at Asn42. Cystine bridges form between Cys73–Cys114 and Cys102–Cys163. Asn174 and Asn188 each carry an N-linked (GlcNAc...) asparagine glycan. Asn188 carries GPI-anchor amidated asparagine lipidation. A propeptide spans 189-213 (removed in mature form); that stretch reads NSCSSPGGCRLFLSTIPVLWTLLGS.

It belongs to the ephrin family. In terms of assembly, binds to the receptor tyrosine kinases EPHA3, EPHA4 and EPHA5. Interacts with EPHA8; activates EPHA8.

The protein resides in the cell membrane. Functionally, cell surface GPI-bound ligand for Eph receptors, a family of receptor tyrosine kinases which are crucial for migration, repulsion and adhesion during neuronal, vascular and epithelial development. Binds promiscuously Eph receptors residing on adjacent cells, leading to contact-dependent bidirectional signaling into neighboring cells. The signaling pathway downstream of the receptor is referred to as forward signaling while the signaling pathway downstream of the ephrin ligand is referred to as reverse signaling. With the EPHA2 receptor may play a role in bone remodeling through regulation of osteoclastogenesis and osteoblastogenesis. The polypeptide is Ephrin-A2 (EFNA2) (Homo sapiens (Human)).